Consider the following 896-residue polypeptide: Vacuolar zinc transporter TgZnT (896 aa).

At 1 to 472 (MPFSCFVFSQ…ETGTQRARRK (472 aa)) the chain is on the cytoplasmic side. Residues 82 to 91 (VLSSRGDESV) show a composition bias toward basic and acidic residues. Disordered regions lie at residues 82–104 (VLSSRGDESVRSPQGRQVHSPGF), 205–227 (MKEIPSPRSRSPSDPDSSSRPCA), and 255–329 (SSSC…SSAS). Composition is skewed to low complexity over residues 210-225 (SPRSRSPSDPDSSSRP) and 255-266 (SSSCCSRSNSSS). Basic and acidic residues predominate over residues 303–322 (VHERRAEATCCAPRDRHGGD). Residues 473–493 (LVMASMVCCVFMFVEIVAGVL) form a helical membrane-spanning segment. Topologically, residues 494–502 (ANSLALMTD) are vacuolar. Residues 503–523 (ASHLLSDLCAFLISLFALWVS) form a helical membrane-spanning segment. Residues 524 to 539 (ELKGNPSMSFGYHRAE) lie on the Cytoplasmic side of the membrane. Residues 540–560 (ILGALLSVFLIWVLTAVLIYA) form a helical membrane-spanning segment. The Vacuolar portion of the chain corresponds to 561–573 (ACFRLVDPPQVDG). The helical transmembrane segment at 574–594 (ELMFWTALLGTLANLFMTHIL) threads the bilayer. The Cytoplasmic segment spans residues 595-737 (KVHSHGIGQV…YENMNLRAAY (143 aa)). Positions 621-707 (LQASSSSPEK…RPFSASSAGS (87 aa)) are disordered. The span at 656 to 680 (RDAEAGRDAEAGRDAEAGRDAETGR) shows a compositional bias: basic and acidic residues. Residues 738 to 758 (IHALGDLLQNIGVMIASALIW) form a helical membrane-spanning segment. The Vacuolar portion of the chain corresponds to 759-762 (WRPD). The helical transmembrane segment at 763-783 (WAIADPICTFIFSIFVLFTTL) threads the bilayer. Residues 784–896 (SILKEALNVL…CSDPMKVFRR (113 aa)) are Cytoplasmic-facing.

The protein belongs to the cation diffusion facilitator (CDF) transporter (TC 2.A.4) family. SLC30A subfamily.

It localises to the vacuole membrane. Its subcellular location is the cytoplasmic vesicle membrane. Vacuolar zinc transporter that is probably involved in the transfer of zinc ions from the cytosol to the vacuole for intracellular storage. Plays an essential role in extracellular zinc tolerance. The sequence is that of Vacuolar zinc transporter TgZnT from Toxoplasma gondii (strain ATCC 50853 / GT1).